Here is a 95-residue protein sequence, read N- to C-terminus: Aspartyl/glutamyl-tRNA(Asn/Gln) amidotransferase subunit C (95 aa).

This sequence belongs to the GatC family. Heterotrimer of A, B and C subunits.

It catalyses the reaction L-glutamyl-tRNA(Gln) + L-glutamine + ATP + H2O = L-glutaminyl-tRNA(Gln) + L-glutamate + ADP + phosphate + H(+). It carries out the reaction L-aspartyl-tRNA(Asn) + L-glutamine + ATP + H2O = L-asparaginyl-tRNA(Asn) + L-glutamate + ADP + phosphate + 2 H(+). Functionally, allows the formation of correctly charged Asn-tRNA(Asn) or Gln-tRNA(Gln) through the transamidation of misacylated Asp-tRNA(Asn) or Glu-tRNA(Gln) in organisms which lack either or both of asparaginyl-tRNA or glutaminyl-tRNA synthetases. The reaction takes place in the presence of glutamine and ATP through an activated phospho-Asp-tRNA(Asn) or phospho-Glu-tRNA(Gln). In Chlorobium limicola (strain DSM 245 / NBRC 103803 / 6330), this protein is Aspartyl/glutamyl-tRNA(Asn/Gln) amidotransferase subunit C.